A 196-amino-acid chain; its full sequence is Probable thymidylate kinase (196 aa).

An ATP-binding site is contributed by 8-15; sequence GIDASGKT.

The protein belongs to the thymidylate kinase family.

It catalyses the reaction dTMP + ATP = dTDP + ADP. This Metallosphaera sedula (strain ATCC 51363 / DSM 5348 / JCM 9185 / NBRC 15509 / TH2) protein is Probable thymidylate kinase.